The sequence spans 258 residues: Thiazole synthase (258 aa).

Lys100 (schiff-base intermediate with DXP) is an active-site residue. 1-deoxy-D-xylulose 5-phosphate is bound by residues Gly161, 187–188, and 209–210; these read AG and NS.

It belongs to the ThiG family. Homotetramer. Forms heterodimers with either ThiH or ThiS.

It is found in the plastid. It localises to the chloroplast. The enzyme catalyses [ThiS sulfur-carrier protein]-C-terminal-Gly-aminoethanethioate + 2-iminoacetate + 1-deoxy-D-xylulose 5-phosphate = [ThiS sulfur-carrier protein]-C-terminal Gly-Gly + 2-[(2R,5Z)-2-carboxy-4-methylthiazol-5(2H)-ylidene]ethyl phosphate + 2 H2O + H(+). The protein operates within cofactor biosynthesis; thiamine diphosphate biosynthesis. Its function is as follows. Catalyzes the rearrangement of 1-deoxy-D-xylulose 5-phosphate (DXP) to produce the thiazole phosphate moiety of thiamine. Sulfur is provided by the thiocarboxylate moiety of the carrier protein ThiS. In vitro, sulfur can be provided by H(2)S. This chain is Thiazole synthase, found in Cyanidioschyzon merolae (strain NIES-3377 / 10D) (Unicellular red alga).